A 188-amino-acid chain; its full sequence is mRNA transport factor GFD1 (188 aa).

A disordered region spans residues 1–128 (MPLESIWADA…KTQSKQDTAS (128 aa)). The segment covering 18–28 (KQKPSHKRSNN) has biased composition (basic residues). Low complexity predominate over residues 29-44 (NKKNNNSRWSNESSSN). Over residues 59–79 (GNHESKTKNKIKETLPREKKP) the composition is skewed to basic and acidic residues. Residues Ser87, Ser106, and Ser111 each carry the phosphoserine modification. Positions 112 to 128 (PSKMKTTKTQSKQDTAS) are enriched in low complexity. A coiled-coil region spans residues 119–164 (KTQSKQDTASKMKLLKKKIEEQREILQKTHHKNQQQQVLMDFLNDE).

As to quaternary structure, interacts with GLE1, NUP42, NAB2, ZDS1 and probably DBP5. Forms a complex with GLE1 and NAB2.

The protein localises to the cytoplasm. The protein resides in the nucleus. It localises to the nuclear pore complex. It is found in the nucleus membrane. High-copy suppressor of mutant alleles of ATP-dependent RNA helicase DBP5, which is involved in mRNA export from the nucleus. It may also play an important role in a late stage of NAB2-mRNA export. The protein is mRNA transport factor GFD1 (GFD1) of Saccharomyces cerevisiae (strain ATCC 204508 / S288c) (Baker's yeast).